The primary structure comprises 97 residues: Putative septation protein SpoVG (97 aa).

Belongs to the SpoVG family.

Its function is as follows. Essential for sporulation. Interferes with or is a negative regulator of the pathway leading to asymmetric septation. In Bacillus cereus (strain 03BB102), this protein is Putative septation protein SpoVG.